The chain runs to 359 residues: 3-dehydroquinate synthase (359 aa).

Residues 72 to 77, 106 to 110, 130 to 131, K143, K152, and 170 to 173 each bind NAD(+); these read EGEEHK, GVVGD, TT, and TLTT. 3 residues coordinate Zn(2+): E185, H248, and H265.

It belongs to the sugar phosphate cyclases superfamily. Dehydroquinate synthase family. Co(2+) is required as a cofactor. Requires Zn(2+) as cofactor. NAD(+) serves as cofactor.

The protein localises to the cytoplasm. It carries out the reaction 7-phospho-2-dehydro-3-deoxy-D-arabino-heptonate = 3-dehydroquinate + phosphate. It participates in metabolic intermediate biosynthesis; chorismate biosynthesis; chorismate from D-erythrose 4-phosphate and phosphoenolpyruvate: step 2/7. Catalyzes the conversion of 3-deoxy-D-arabino-heptulosonate 7-phosphate (DAHP) to dehydroquinate (DHQ). The sequence is that of 3-dehydroquinate synthase from Pelobacter propionicus (strain DSM 2379 / NBRC 103807 / OttBd1).